Consider the following 640-residue polypeptide: MDTNTTSYTPLPGDPFLSGPPETPRRPLKGFAVIFASVIFLMSLVALIIHQGPQQPPDVMPDKQDEHHHPQSTTNTMLSWQRTAFHFQPEKNWMNDPNGPMYYKGWYHFFYQYNPRGAVWGNIVWGHAVSRDLIHWLHLPLAMVADQWYDINGVWTGSATILPNDQIVMLYTGSTNESVQVQCLAYPADHKDPLLTKWVKYSGNPVLVPPPGIGVKDFRDPTTAWYITEGKWRITIGSKVNKTGISLVYDTKDFIKYEQLDGVLHAVPGTGMWECIDFYPVSKTSDKGLDTSQNGADVKHVMKASLDDDRNDYYALGSYNEKTGKWVPDNQKIDVGIGIRYDYGKFYASKTFYDQNKQRRVLWGWIGESDSENADVKKGWASLQGIPRTVLFDQKTGSNLLQWPVEEIEKLRLNKKNFDKVQVKAGSVVPLDVGTATQLDIVAEFQLDQKVVESAAETNEEFSCQTSGGAAKRGALGPFGLLVLADDSLSERTPVYFYVVKGSGGTVNTYFCADQTRSSVATDVVKQVSGSYVPVLKGETLSLRILVDHSIIESFAQGGRTTITTRVYPTQAIYGAARLFLFNNATDTSFTASLQIWQMNSAFIRPFSPDAASHSSFTPVTVFIKFIVPFGIFLTLYFVR.

A disordered region spans residues 1-22 (MDTNTTSYTPLPGDPFLSGPPE). At 1–29 (MDTNTTSYTPLPGDPFLSGPPETPRRPLK) the chain is on the cytoplasmic side. Positions 1 to 78 (MDTNTTSYTP…HPQSTTNTML (78 aa)) are cleaved as a propeptide — removed in mature form. A helical membrane pass occupies residues 30–49 (GFAVIFASVIFLMSLVALII). Residues 50–616 (HQGPQQPPDV…FSPDAASHSS (567 aa)) lie on the Lumenal side of the membrane. Substrate contacts are provided by residues 93–96 (WMND), glutamine 112, tryptophan 120, 155–156 (WT), 219–220 (RD), glutamate 274, and aspartate 307. The active site involves aspartate 96. Residues cysteine 464 and cysteine 512 are joined by a disulfide bond. The chain crosses the membrane as a helical span at residues 617 to 639 (FTPVTVFIKFIVPFGIFLTLYFV). Position 640 (arginine 640) is a topological domain, cytoplasmic.

Belongs to the glycosyl hydrolase 32 family. Expressed in buds, stems, roots and leaves.

Its subcellular location is the membrane. It localises to the vacuole membrane. It catalyses the reaction Hydrolysis of terminal non-reducing beta-D-fructofuranoside residues in beta-D-fructofuranosides.. Vacuolar invertase. This Rosa hybrid cultivar protein is Acid beta-fructofuranosidase 2, vacuolar.